Here is an 864-residue protein sequence, read N- to C-terminus: Leucine--tRNA ligase (864 aa).

Positions 42 to 52 (PYPSGKLHMGH) match the 'HIGH' region motif. A 'KMSKS' region motif is present at residues 624-628 (KMSKS). Position 627 (Lys627) interacts with ATP.

The protein belongs to the class-I aminoacyl-tRNA synthetase family.

It is found in the cytoplasm. The catalysed reaction is tRNA(Leu) + L-leucine + ATP = L-leucyl-tRNA(Leu) + AMP + diphosphate. This is Leucine--tRNA ligase from Burkholderia cenocepacia (strain HI2424).